The chain runs to 395 residues: Univin (395 aa).

The signal sequence occupies residues 1 to 19 (MDVSKVLILTLIWLLTADS). A propeptide spanning residues 20–272 (APPDYVTLTR…CSKRNRRNKR (253 aa)) is cleaved from the precursor. N-linked (GlcNAc...) asparagine glycosylation occurs at Asn-50. Residues 69–97 (EGAAASRGGETEIGKEEEEDGRPCSETKL) are disordered. Residues Asn-116 and Asn-336 are each glycosylated (N-linked (GlcNAc...) asparagine). 3 disulfide bridges follow: Cys-294/Cys-360, Cys-323/Cys-392, and Cys-327/Cys-394.

The protein belongs to the TGF-beta family. As to quaternary structure, homodimer; disulfide-linked.

It is found in the secreted. Its function is as follows. Could have a critical role in early developmental decisions in the sea urchin embryo. In Strongylocentrotus purpuratus (Purple sea urchin), this protein is Univin.